The chain runs to 1268 residues: Meiosis inhibitor protein 1 (1268 aa).

Strongly expressed in testis, weakly in brain, and not detected in spleen, liver, kidney, small intestine or colon.

In terms of biological role, required for normal meiotic chromosome synapsis. May be involved in the formation of meiotic double-strand breaks (DSBs) in spermatocytes. The sequence is that of Meiosis inhibitor protein 1 from Mus musculus (Mouse).